A 130-amino-acid polypeptide reads, in one-letter code: ATP synthase epsilon chain (130 aa).

It belongs to the ATPase epsilon chain family. As to quaternary structure, F-type ATPases have 2 components, CF(1) - the catalytic core - and CF(0) - the membrane proton channel. CF(1) has five subunits: alpha(3), beta(3), gamma(1), delta(1), epsilon(1). CF(0) has three main subunits: a, b and c.

It localises to the cell inner membrane. In terms of biological role, produces ATP from ADP in the presence of a proton gradient across the membrane. This is ATP synthase epsilon chain from Sulfurimonas denitrificans (strain ATCC 33889 / DSM 1251) (Thiomicrospira denitrificans (strain ATCC 33889 / DSM 1251)).